The sequence spans 569 residues: Proline--tRNA ligase (569 aa).

The protein belongs to the class-II aminoacyl-tRNA synthetase family. ProS type 1 subfamily. Homodimer.

The protein resides in the cytoplasm. The catalysed reaction is tRNA(Pro) + L-proline + ATP = L-prolyl-tRNA(Pro) + AMP + diphosphate. Its function is as follows. Catalyzes the attachment of proline to tRNA(Pro) in a two-step reaction: proline is first activated by ATP to form Pro-AMP and then transferred to the acceptor end of tRNA(Pro). As ProRS can inadvertently accommodate and process non-cognate amino acids such as alanine and cysteine, to avoid such errors it has two additional distinct editing activities against alanine. One activity is designated as 'pretransfer' editing and involves the tRNA(Pro)-independent hydrolysis of activated Ala-AMP. The other activity is designated 'posttransfer' editing and involves deacylation of mischarged Ala-tRNA(Pro). The misacylated Cys-tRNA(Pro) is not edited by ProRS. This Shewanella woodyi (strain ATCC 51908 / MS32) protein is Proline--tRNA ligase.